The primary structure comprises 430 residues: MPIDFHLSASQKGTYQAARSLARNLLMPARQTYLQHPPNSPLRFQSTQPTYAAAVSAGILKGQISPAHGGTGGTLIESAILVEECYSVEPSAALTIFATGLGLTPINLAAGPQHAEFLAPFLSGEGSPLASLVFSEPGGVANALEKGAPGFQTTARLEGDEWVINGEKMWATNCAGWDFKGCDLACVVCRDATTPLEEGQDPENKVMIILVTRADLDRNGEGSFEVLRHVATPGHTSVSGPHVRYTNVRVPTKNVLCPAGQGAKVAFGAFDGSAVLVGAMGVGLMRAAFDAALKFAKEDNRGGAVPLLERQAFADLLSGVKIQTEAARALTWKAAHAMENGPGDYDARRELALAAKVFCSEAAVKACTDVINAVGISAYDLQRPFSDLLNTAVVLPIFDGGNVGIRRRHLQQLMLKPTYDAWSSTYGSFP.

FAD contacts are provided by residues 132-135 (LVFS), 140-142 (VAN), 170-172 (WAT), Arg-301, Gln-311, 372-376 (NAVGI), and 397-401 (IFDGG). Asp-399 (proton acceptor) is an active-site residue.

Belongs to the acyl-CoA dehydrogenase family. As to quaternary structure, homotetramer. FAD is required as a cofactor.

The enzyme catalyses a primary nitroalkane + O2 + H2O = an aldehyde + nitrite + H2O2 + H(+). It carries out the reaction a secondary nitroalkane + O2 + H2O = a ketone + nitrite + H2O2 + H(+). Nitroalkane oxidase (NAO) catalyzes the oxidation of nitroalkanes to the corresponding aldehydes or ketones with the release of nitrite and the consumption of molecular oxygen to yield hydrogen peroxide. NAO is unusual, since it catalyzes substrate oxidation by removing a substrate proton to form a carbanion intermediate. Prefers longer nitroalkanes, with 1-nitrohexane having the highest activity. In Podospora anserina (strain S / ATCC MYA-4624 / DSM 980 / FGSC 10383) (Pleurage anserina), this protein is Nitroalkane oxidase.